The chain runs to 436 residues: UPF0597 protein YhaM (436 aa).

This sequence belongs to the UPF0597 family.

In Shigella dysenteriae serotype 1 (strain Sd197), this protein is UPF0597 protein YhaM.